Consider the following 254-residue polypeptide: Pyruvate dehydrogenase complex repressor (254 aa).

In terms of domain architecture, HTH gntR-type spans 9–77 (PKLSDVIEQQ…QGGGTFVQSS (69 aa)). The H-T-H motif DNA-binding region spans 37–56 (ERELAKQFDVSRPSLREAIQ).

Its function is as follows. Transcriptional repressor for the pyruvate dehydrogenase complex genes aceEF and lpd. The chain is Pyruvate dehydrogenase complex repressor (pdhR) from Salmonella typhi.